The sequence spans 220 residues: Ribosome biogenesis protein 15 (220 aa).

The tract at residues 1–82 is disordered; that stretch reads MVKSTSKTST…KQANEKKSKD (82 aa). The segment covering 9 to 30 has biased composition (basic and acidic residues); it reads STKETVTKQPTEEKPIQEKEEL. A compositionally biased stretch (acidic residues) spans 39–60; that stretch reads SDEEDEKDEDEIEGLAASDDEQ. Positions 91–169 constitute an RRM domain; sequence GIIYVSRLPH…HLLQVRVLPK (79 aa).

In terms of assembly, component of the pre-66S ribosomal particle. Interacts with NOP7 and RRP1.

Its subcellular location is the cytoplasm. The protein localises to the nucleus. It is found in the nucleolus. Its function is as follows. Involved in the biogenesis of the 60S ribosomal subunit. Required for pre-rRNA processing and cytokinesis. Associates with the precursors of the 25S and 5.8S rRNAs. This is Ribosome biogenesis protein 15 from Saccharomyces cerevisiae (strain ATCC 204508 / S288c) (Baker's yeast).